The sequence spans 70 residues: Small ribosomal subunit protein bS21 (70 aa).

The disordered stretch occupies residues 39–70 (EKPTTERKRKKAAAVSRTRKRLRSQMLPKKLY). Residues 45 to 61 (RKRKKAAAVSRTRKRLR) are compositionally biased toward basic residues.

This sequence belongs to the bacterial ribosomal protein bS21 family.

This is Small ribosomal subunit protein bS21 from Ralstonia nicotianae (strain ATCC BAA-1114 / GMI1000) (Ralstonia solanacearum).